The sequence spans 88 residues: Phosphocarrier protein HPr (88 aa).

An HPr domain is found at 1–88 (MEQNSYVIID…DVLSKEGLTK (88 aa)). The active-site Pros-phosphohistidine intermediate is His15. A Phosphoserine; by HPrK/P modification is found at Ser46.

The protein localises to the cytoplasm. Its activity is regulated as follows. Phosphorylation on Ser-46 inhibits the phosphoryl transfer from enzyme I to HPr. Its function is as follows. General (non sugar-specific) component of the phosphoenolpyruvate-dependent sugar phosphotransferase system (sugar PTS). This major carbohydrate active-transport system catalyzes the phosphorylation of incoming sugar substrates concomitantly with their translocation across the cell membrane. The phosphoryl group from phosphoenolpyruvate (PEP) is transferred to the phosphoryl carrier protein HPr by enzyme I. Phospho-HPr then transfers it to the PTS EIIA domain. P-Ser-HPr interacts with the catabolite control protein A (CcpA), forming a complex that binds to DNA at the catabolite response elements cre, operator sites preceding a large number of catabolite-regulated genes. Thus, P-Ser-HPr is a corepressor in carbon catabolite repression (CCR), a mechanism that allows bacteria to coordinate and optimize the utilization of available carbon sources. P-Ser-HPr also plays a role in inducer exclusion, in which it probably interacts with several non-PTS permeases and inhibits their transport activity. This chain is Phosphocarrier protein HPr (ptsH), found in Staphylococcus aureus (strain MSSA476).